The sequence spans 476 residues: Cysteine--tRNA ligase (476 aa).

A Zn(2+)-binding site is contributed by cysteine 28. Residues 30–40 carry the 'HIGH' region motif; the sequence is PTVYDNTHLGH. Residues cysteine 208, histidine 233, and glutamate 237 each contribute to the Zn(2+) site. The short motif at 265-269 is the 'KMSKS' region element; that stretch reads KMSKS. Residue lysine 268 coordinates ATP.

This sequence belongs to the class-I aminoacyl-tRNA synthetase family. Zn(2+) is required as a cofactor.

It localises to the cytoplasm. The enzyme catalyses tRNA(Cys) + L-cysteine + ATP = L-cysteinyl-tRNA(Cys) + AMP + diphosphate. The protein is Cysteine--tRNA ligase of Methanococcus maripaludis (strain DSM 14266 / JCM 13030 / NBRC 101832 / S2 / LL).